A 301-amino-acid polypeptide reads, in one-letter code: Bifunctional protein FolD (301 aa).

NADP(+) contacts are provided by residues 166 to 168 (GKS), S191, and I232.

The protein belongs to the tetrahydrofolate dehydrogenase/cyclohydrolase family. Homodimer.

The catalysed reaction is (6R)-5,10-methylene-5,6,7,8-tetrahydrofolate + NADP(+) = (6R)-5,10-methenyltetrahydrofolate + NADPH. It catalyses the reaction (6R)-5,10-methenyltetrahydrofolate + H2O = (6R)-10-formyltetrahydrofolate + H(+). Its pathway is one-carbon metabolism; tetrahydrofolate interconversion. Its function is as follows. Catalyzes the oxidation of 5,10-methylenetetrahydrofolate to 5,10-methenyltetrahydrofolate and then the hydrolysis of 5,10-methenyltetrahydrofolate to 10-formyltetrahydrofolate. The polypeptide is Bifunctional protein FolD (Orientia tsutsugamushi (strain Ikeda) (Rickettsia tsutsugamushi)).